A 69-amino-acid chain; its full sequence is Protein hunchback (69 aa).

3 C2H2-type zinc fingers span residues 1–11 (KHHLEYHLRNH), 17–39 (FKCEKCSYSCVNKSMLNSHLKSH), and 45–69 (YRCANCTYATKYCHSLKLHLRKYSH).

It belongs to the hunchback C2H2-type zinc-finger protein family.

The protein localises to the nucleus. Gap class segmentation protein that controls development of head structures. The protein is Protein hunchback (hb) of Apis mellifera (Honeybee).